Reading from the N-terminus, the 199-residue chain is Dephospho-CoA kinase (199 aa).

In terms of domain architecture, DPCK spans Ile3–Ala199. Residue Gly11–Thr16 participates in ATP binding.

The protein belongs to the CoaE family.

The protein localises to the cytoplasm. The enzyme catalyses 3'-dephospho-CoA + ATP = ADP + CoA + H(+). It functions in the pathway cofactor biosynthesis; coenzyme A biosynthesis; CoA from (R)-pantothenate: step 5/5. In terms of biological role, catalyzes the phosphorylation of the 3'-hydroxyl group of dephosphocoenzyme A to form coenzyme A. This chain is Dephospho-CoA kinase, found in Bradyrhizobium diazoefficiens (strain JCM 10833 / BCRC 13528 / IAM 13628 / NBRC 14792 / USDA 110).